The following is a 418-amino-acid chain: Probable aminotransferase Rv1178 (418 aa).

The segment at 22–42 is disordered; that stretch reads GQGWHDRERPASGQGSGAAER.

This sequence belongs to the class-I pyridoxal-phosphate-dependent aminotransferase family. Requires pyridoxal 5'-phosphate as cofactor.

The sequence is that of Probable aminotransferase Rv1178 from Mycobacterium tuberculosis (strain ATCC 25618 / H37Rv).